Consider the following 486-residue polypeptide: MTQYIQGQWLAGEGHEINSKNPANGDVIWQGNTATATQVNAAVDAARAAQFDWFMLGYEARLAIVEAYRAQLEANKAEIAETIAQETGKPQWETATEVGAMIGKIALSAKAHDKRTGTETNDLPAGRAVLRHKPHGVVAVFGPYNFPGHLPNGHIVPALLAGNTVVFKPSELTPKVAELMLKCWDKAGLPQGVVNLVQGEVETGKALASHPQIDGLFFTGSSRTGHILHEQYAGLPGKILALEMGGNNPLIVKGVTDTKAAVHDIIQSAYISSGQRCTCARRLYIEEGAQGDALIAELVKAIKQIKVGAWNVQPQPFMGSMISETAARGMVAAQATLQSLGGVSLVELVQVEAGTGLVTPGLIDVTKVAELPDEEYFGPLLQLVRYSDFDQAIHLANATRYGLSAGLLADSREDYDYFLARIRAGIVNWNKQITGASGAAPFGGVGASGNHRASAFYAADYCAYPVASMEADAVSLPATLSPGLSI.

Glycine 220 to glycine 225 serves as a coordination point for NAD(+). Catalysis depends on residues glutamate 243 and cysteine 277.

This sequence belongs to the aldehyde dehydrogenase family. AstD subfamily.

The catalysed reaction is N-succinyl-L-glutamate 5-semialdehyde + NAD(+) + H2O = N-succinyl-L-glutamate + NADH + 2 H(+). It participates in amino-acid degradation; L-arginine degradation via AST pathway; L-glutamate and succinate from L-arginine: step 4/5. Catalyzes the NAD-dependent reduction of succinylglutamate semialdehyde into succinylglutamate. This is N-succinylglutamate 5-semialdehyde dehydrogenase from Shewanella frigidimarina (strain NCIMB 400).